The following is a 1369-amino-acid chain: Microtubule-associated tumor suppressor candidate 2 (1369 aa).

7 disordered regions span residues 180 to 262 (ASSS…TQTV), 374 to 442 (GRGN…FIPN), 477 to 509 (GENKTEVPEPLDPQSGRSEARESKEVTTSVAEN), 582 to 627 (NTSP…EERT), 791 to 839 (RSSA…LRPP), 861 to 992 (SSVS…QARE), and 1331 to 1369 (WKLQTGDPTSPIKLSPTSPVYRGSSSGPSSPARVSTTPR). 2 stretches are compositionally biased toward polar residues: residues 246–262 (PSTSESKQSTPSETQTV) and 392–401 (LHTTPKQGSA). The segment at 641–980 (RPKIITYIRR…PKQRTAAARN (340 aa)) is mediates interaction with MAPRE1. Residues 801–890 (GPITTATSLY…TRSTFGNEEQ (90 aa)) form a sufficient for interaction with KIF2C region. Residues 801-1150 (GPITTATSLY…HDAALLEMEN (350 aa)) are localization to the growing distal tip of microtubules. A compositionally biased stretch (polar residues) spans 804–814 (TTATSLYSSDP). Low complexity predominate over residues 821–834 (ASSSNAAKSNLPKS). A compositionally biased stretch (basic and acidic residues) spans 937–947 (TKKDAQKDQDT). Residues 991–1335 (REAERQLVLR…NEELLWKLQT (345 aa)) are a coiled coil. The segment covering 1348–1369 (SPVYRGSSSGPSSPARVSTTPR) has biased composition (low complexity).

This sequence in the C-terminal section; belongs to the MTUS1 family. In terms of assembly, homodimer. Interacts with KIF2C and MAPRE1; the interaction is direct and probably targets MTUS2 and KIF2C to microtubules. As to expression, detected in embryonic stem cells differentiating to cardiomyocytes.

It is found in the cytoplasm. The protein resides in the cytoskeleton. Functionally, binds microtubules. Together with MAPRE1 may target the microtubule depolymerase KIF2C to the plus-end of microtubules. May regulate the dynamics of microtubules at their growing distal tip. The protein is Microtubule-associated tumor suppressor candidate 2 (MTUS2) of Homo sapiens (Human).